A 5376-amino-acid chain; its full sequence is Zonadhesin (5376 aa).

An N-terminal signal peptide occupies residues 1–17 (MALPVWTLMLLVGAAWG). Residues 18–5310 (QEQVPAWRPN…TTRKKIEASS (5293 aa)) lie on the Extracellular side of the membrane. MAM domains lie at 45–210 (SKCD…TCNQ), 215–374 (QMCT…PCGE), and 377–542 (PQCD…PCRV). 2 N-linked (GlcNAc...) asparagine glycosylation sites follow: N339 and N499. Residues 547 to 1170 (EIPSSPLLPP…PTTGVSTTES (624 aa)) are 80 X heptapeptide repeats (approximate) (mucin-like domain). Disordered stretches follow at residues 553–579 (LLPP…TKAT) and 1037–1113 (TVPP…TVST). Residues 1052 to 1113 (TEVTTTPPEE…IASEETTVST (62 aa)) are compositionally biased toward low complexity. Residues 1171–1220 (CPPNAHIELCACPASCESPKPSCQPPCIPGCVCNPGFLFSNNQCINESSC) enclose the TIL 1 domain. Residues N1216, N1239, and N1314 are each glycosylated (N-linked (GlcNAc...) asparagine). The VWFC 1 domain occupies 1227–1275 (KHYKPGEEWFTPNCTERCRCLPGSLMECQISQCGTHTVCQLKSDQYQCE). A VWFD 1 domain is found at 1280 to 1462 (ATCLVYGDLH…DKDWVSSRCQ (183 aa)). 2 cysteine pairs are disulfide-bonded: C1282–C1417 and C1304–C1461. Positions 1555-1608 (CPKNSRYSLCAKPCPETCHPISTTQHCSDKCVEGCECDPGFILSGSECVPSSQC) constitute a TIL 2 domain. A VWFC 2 domain is found at 1609 to 1664 (GCTSFQGRYFKLQEQWFNPDCKEICTCESHNHILCKPWKCKAQEACSYKNGVLGCH). A VWFD 2 domain is found at 1669 to 1849 (ATCMVSGDPH…ILEASDPGCF (181 aa)). 2 disulfide bridges follow: C1671-C1809 and C1693-C1848. N-linked (GlcNAc...) asparagine glycans are attached at residues N1814, N1908, and N1933. Residues 1941–1995 (CPPRSSYNPCANSCPATCLTLSTPRDCPTLPCVEGCECQSGHILSGTTCVPLRQC) form the TIL 3 domain. The VWFC 3 domain maps to 1996–2052 (GCSDQDGSYHLLGESWYTEKTCTTLCTCSAHSNITCSPTACKANHVCLRQEGLLRCA). N2028, N2111, N2142, and N2332 each carry an N-linked (GlcNAc...) asparagine glycan. A VWFD 3 domain is found at 2056–2239 (GECRISEDSQ…KDKSMDPNCQ (184 aa)). Disulfide bonds link C2058-C2200 and C2080-C2238. Residues 2340–2398 (CPAHSHYTNCLPSCPPSCLDPDSRCEGSGHKVPATCREGCICQPDYVLLNDKCVLRSHC) enclose the TIL 4 domain. In terms of domain architecture, VWFC 4 spans 2399–2454 (GCKDAQGVFIPAGKTWISEDCTQSCTCMKGSMRCWDFQCPPGTYCKNSNDGSSNCV). The TIL 5 domain occupies 2460–2518 (CPAHSKFTDCLPPCHPSCSDPDGHCEGISTNAHSNCKEGCVCQPGYVLRNDKCVLRIEC). A VWFC 5 domain is found at 2519 to 2574 (GCQHTQGGFIPAGKNWTSRGCSQSCDCMEGVIRCQNFQCPSGTYCQDIEDGTSNCA). N-linked (GlcNAc...) asparagine glycosylation is found at N2533 and N2575. The TIL 6 domain occupies 2580 to 2638 (CPAHSSFTNCLPPCQPSCSDPEGHCGGSTTKAPSACQEGCVCEPDYVVLNNKCVPRIEC). The 56-residue stretch at 2639-2694 (GCKDAQGVLIPADKIWINKGCTQTCACVTGTIHCRDFQCPSGTYCKDIKDDASNCT) folds into the VWFC 6 domain. An N-linked (GlcNAc...) asparagine glycan is attached at N2692. The region spanning 2700 to 2758 (CPDHSLYTHCLPSCLLSCSDPDGLCRGTSPEAPSTCKEGCVCDPDYVLSNDKCVLRIEC) is the TIL 7 domain. In terms of domain architecture, VWFC 7 spans 2759–2814 (GCKDAQGVLIPAGKTWINRGCTQSCSCMGGAIQCQNFKCPSEAYCQDMEDGNSNCT). N-linked (GlcNAc...) asparagine glycosylation occurs at N2812. In terms of domain architecture, TIL 8 spans 2820-2878 (CPAHSHYTNCLPTCQPSCSDPDGHCEGSSTKAPSACKEGCVCEPDYVMLNNKCVPRIEC). In terms of domain architecture, VWFC 8 spans 2879 to 2934 (GCKDTQGVLIPADKTWINRGCTQSCTCRGGAIQCQKYHCSSGTYCKDMEDDSSSCA). The TIL 9 domain occupies 2940-2998 (CPAHSHFTNCLPPCQPSCLDSEGHCEGSTTKAPSACQEGCVCEPDYVVLNNKCVPRIEC). The 56-residue stretch at 2999 to 3054 (GCKDAQGVLIPADKTWINRGCTQSCTCKGGAIQCQKFQCPSETYCKDIEDGNSNCT) folds into the VWFC 9 domain. N3052, N3065, N3144, and N3172 each carry an N-linked (GlcNAc...) asparagine glycan. Residues 3060–3118 (CPANSNFTSCLPSCQPSCSNTDVHCEGSSPNTLSSCREGCVCQSGYVLHNDKCILRNQC) enclose the TIL 10 domain. The VWFC 10 domain maps to 3119 to 3174 (GCKDAQGALIPEGKTWITSGCTQSCNCTGGAIQCQNFQCPLKTYCKDLKDGSSNCT). Residues 3180-3238 (CPAHSRYTNCLPSCPPLCLDPEGLCEGTSPKVPSTCREGCICQPGYLMHKNKCVLRIFC) form the TIL 11 domain. Residues 3239 to 3294 (GCKNTQGAFISADKTWISRGCTQSCTCPAGAIHCRNFKCPSGTYCKNGDNGSSNCT) enclose the VWFC 11 domain. 2 N-linked (GlcNAc...) asparagine glycosylation sites follow: N3288 and N3292. A TIL 12 domain is found at 3300–3355 (CPTNSQFTDCLPSCVPSCSNRCEVTSPSVPSSCREGCLCNHGFVFSEDKCVPRTQC). The 56-residue stretch at 3356–3411 (GCKDARGAIIPAGKTWTSKGCTQSCACVEGNIQCQNFQCPPETYCKDNSEGSSTCT) folds into the VWFC 12 domain. The TIL 13 domain maps to 3417–3475 (CPAHTQYTSCLPSCLPSCLDPEGLCKDISPKVPSTCKEGCVCQSGYVLNSDKCVLRAEC). A VWFC 13 domain is found at 3476-3531 (DCKDAQGALIPAGKTWTSPGCTQSCACMGGAVQCQSSQCPPGTYCKDNEDGNSNCA). Positions 3537–3595 (CPAHSLFTNCLPPCLPSCLDPDGLCKGASPKVPSTCKEGCICQSGYVLSNNKCLLRNRC) constitute a TIL 14 domain. The region spanning 3596–3651 (GCKDAHGALIPEDKTWVSRGCTQSCVCTGGSIQCLSSQCPPGAYCKDNEDGSSNCA) is the VWFC 14 domain. Residues 3657–3715 (CPANSHYTDCFPPCPPSCSDPEGHCEASGPRVLSTCREGCLCNPGFVLDRDKCVPRVEC) enclose the TIL 15 domain. Positions 3716 to 3771 (GCKDAQGALIPSGKTWTSPGCTQSCACMGGVVQCQSSQCPPGTYCKDNEDGNSNCA) constitute a VWFC 15 domain. Positions 3777-3835 (CPTHSNYTDCLPFCLPSCLDPSALCGGTSPKGPSTCKEGCVCQPGYVLDKDKCILKIEC) constitute a TIL 16 domain. N-linked (GlcNAc...) asparagine glycosylation occurs at N3782. Residues 3836-3891 (GCRDTQGAVIPAGKTWLSTGCIQSCACVEGTIQCQNFQCPPGTYCNHNNNCAKIPL) enclose the VWFC 16 domain. One can recognise a TIL 17 domain in the interval 3893–3951 (CPAHSHFTSCLPSCPPSCANLDGSCEQTSPKVPSTCKEGCLCQPGYFLNNGKCVLQTHC). Residues 3952–4007 (DCKDAEGGLVPAGKTWTSKDCTQSCACTGGAVQCQNFQCPLGTYCKDSGDGSSNCT) enclose the VWFC 17 domain. The N-linked (GlcNAc...) asparagine glycan is linked to N4005. The region spanning 4029-4087 (CPAHSHFTSCLPSCPPSCSNLDGSCVESNFKAPSVCKKGCICQPGYLLNNDKCVLRIQC) is the TIL 18 domain. Positions 4088–4143 (GCKDTQGGLIPAGRTWISSDCTKSCSCMGGIIQCRDFQCPPGTYCKESNDSSRTCA) constitute a VWFC 18 domain. N-linked (GlcNAc...) asparagine glycosylation is present at N4136. Residues 4149 to 4207 (CPAHSHYTNCLPACSRSCTDLDGHCEGTSPKVPSPCKEGCLCQPGYVVHNHKCVLQIHC) form the TIL 19 domain. The region spanning 4208–4262 (GCKDAQGGFVPAGKTWISRGCTQSCACVGGAVQCHNFTCPTGTQCQNSSCSKITV) is the VWFC 19 domain. N-linked (GlcNAc...) asparagine glycans are attached at residues N4243 and N4254. Residues 4264–4322 (CPAHSQYTTCLPSCLPSCFDPEGLCGGASPRAPSTCREGCVCEADYVLREDKCVLRTQC) form the TIL 20 domain. The VWFC 20 domain occupies 4323 to 4378 (GCKDAQGDLIPANKTWLTRGCAQKCTCKGGNIHCWNFKCPLGTECKDSVDGGSNCT). N-linked (GlcNAc...) asparagine glycans are attached at residues N4335 and N4376. The TIL 21 domain maps to 4384–4442 (CPAHSHHTYCLPSCIPSCSNVNDRCESTSLQRPSTCIEGCLCHSGFVFSKDKCVPRTQC). Residues 4443-4498 (GCKDSQGTLIPAGKNWITTGCSQRCTCTGGLVQCHDFQCPSGAECQDIEDGNSNCV) form the VWFC 21 domain. One can recognise a TIL 22 domain in the interval 4504-4562 (CPAHSHYSKCLPPCQPSCSDPDGHCEGTSPEAPSTCEEGCVCEPDYVLSNDKCVPSSEC). A VWFC 22 domain is found at 4563 to 4618 (GCKDAHGVLIPESKTWVSRGCTKNCTCKGGTVQCHDFSCPTGSRCLDNNEGNSNCV). N4586 carries an N-linked (GlcNAc...) asparagine glycan. One can recognise a TIL 23 domain in the interval 4624–4682 (CPAHSLYTNCLPSCLPSCSDPEGLCGGTSPEVPSTCKEGCICQSGYVLHKNKCMLRIHC). The 56-residue stretch at 4683 to 4738 (DCKDFQGSLIKTGQTWISSGCSKICTCKGGFFQCQSYKCPSGTQCEESEDGSSNCV) folds into the VWFC 23 domain. Positions 4744-4802 (CPANSLYTHCLPTCLPSCSNPDGRCEGTSHKAPSTCREGCVCQPGYLLNKDTCVHKNQC) constitute a TIL 24 domain. One can recognise a VWFC 24 domain in the interval 4803–4858 (GCKDIRGNIIPAGNTWISSDCTQSCACTDGVIQCQNFVCPSGSHCQYNEDGSSDCA). The VWFD 4 domain maps to 4863–5038 (ERCTIFGDPY…SWEVKAQHAF (176 aa)). A disulfide bridge links C4865 with C5001. N5136 carries an N-linked (GlcNAc...) asparagine glycan. One can recognise a TIL 25 domain in the interval 5150–5203 (CPANTVYQRCMTPCPASCAKFVTPKVCEGPCVEGCASLPGYIYSDTQSLPVTHC). Residues 5204–5258 (GCTADGIYYKLGDSFVTNDCSQHCTCASQGILLCEPYGCRAGESCMVANFTRGCF) enclose the VWFC 25 domain. N5252 is a glycosylation site (N-linked (GlcNAc...) asparagine). The EGF-like domain maps to 5259–5295 (QDSPCLQNPCHNDGRCEEQGATFICHCDFGYGGEFCT). Intrachain disulfides connect C5263–C5274, C5268–C5283, and C5285–C5294. A helical membrane pass occupies residues 5311–5337 (LVAILPGVLVMVLVPVLLPRVYVYMAT). Residues 5338 to 5376 (RTTMGRRRMKRKEKKLLRQSRLRLEDADVPEPTFKATEF) lie on the Cytoplasmic side of the membrane.

Probably forms covalent oligomers. In terms of tissue distribution, in testis, primarily in haploid spermatids.

The protein localises to the cell membrane. Its function is as follows. Binds in a species-specific manner to the zona pellucida of the egg. May be involved in gamete recognition and/or signaling. This chain is Zonadhesin (Zan), found in Mus musculus (Mouse).